Reading from the N-terminus, the 142-residue chain is MGLKLNGRYISLILAVQIAYLVQAVRAAGKCDAVFKGFSDCLLKLGDSMANYPQGLDDKTNIKTVCTYWEDFHSCTVTALTDCQEGAKDMWDKLRKESKNLNIQGSLFELCGSSNGAAGSLLPALSVLLVSLSAALATWFSF.

The first 27 residues, M1–A27, serve as a signal peptide directing secretion. G116 carries GPI-anchor amidated glycine lipidation. A propeptide spans A117–F142 (removed in mature form).

It belongs to the neuritin family. In terms of assembly, component of the outer core of AMPAR complex. AMPAR complex consists of an inner core made of 4 pore-forming GluA/GRIA proteins (GRIA1, GRIA2, GRIA3 and GRIA4) and 4 major auxiliary subunits arranged in a twofold symmetry. One of the two pairs of distinct binding sites is occupied either by CNIH2, CNIH3 or CACNG2, CACNG3. The other harbors CACNG2, CACNG3, CACNG4, CACNG8 or GSG1L. This inner core of AMPAR complex is complemented by outer core constituents binding directly to the GluA/GRIA proteins at sites distinct from the interaction sites of the inner core constituents. Outer core constituents include at least PRRT1, PRRT2, CKAMP44/SHISA9, FRRS1L and NRN1. The proteins of the inner and outer core serve as a platform for other, more peripherally associated AMPAR constituents. Alone or in combination, these auxiliary subunits control the gating and pharmacology of the AMPAR complex and profoundly impact their biogenesis and protein processing. As to expression, expressed in the brain (at protein level).

The protein resides in the cell membrane. It is found in the synapse. In terms of biological role, promotes neurite outgrowth and especially branching of neuritic processes in primary hippocampal and cortical cells. This chain is Neuritin (Nrn1), found in Mus musculus (Mouse).